Reading from the N-terminus, the 391-residue chain is Curcumin synthase 2 (391 aa).

Cysteine 166 is an active-site residue.

It belongs to the thiolase-like superfamily. Chalcone/stilbene synthases family. As to quaternary structure, homodimer.

It carries out the reaction (E)-feruloylacetyl-CoA + (E)-feruloyl-CoA + H2O = curcumin + CO2 + 2 CoA. Its pathway is secondary metabolite biosynthesis; flavonoid biosynthesis. Its function is as follows. Catalyzes the synthesis of curcumin by condensing feruloyl-CoA with a diketide-CoA in the curcuminoid biosynthesis. The protein is Curcumin synthase 2 (CURS2) of Curcuma longa (Turmeric).